The following is a 721-amino-acid chain: Polyribonucleotide nucleotidyltransferase (721 aa).

The Mg(2+) site is built by Asp-495 and Asp-501. Residues Pro-562–Ile-621 form the KH domain. One can recognise an S1 motif domain in the interval Gly-631–Arg-699. The tract at residues Gly-700–Asn-721 is disordered.

It belongs to the polyribonucleotide nucleotidyltransferase family. The cofactor is Mg(2+).

Its subcellular location is the cytoplasm. It catalyses the reaction RNA(n+1) + phosphate = RNA(n) + a ribonucleoside 5'-diphosphate. Involved in mRNA degradation. Catalyzes the phosphorolysis of single-stranded polyribonucleotides processively in the 3'- to 5'-direction. The protein is Polyribonucleotide nucleotidyltransferase of Prochlorococcus marinus (strain MIT 9303).